The sequence spans 91 residues: Small integral membrane protein 12 (91 aa).

Residues 12 to 34 (YAPYVTFPVAFVVGAVGYHLEWF) traverse the membrane as a helical segment.

Belongs to the SMIM12 family.

It is found in the membrane. The chain is Small integral membrane protein 12 (smim12) from Danio rerio (Zebrafish).